The sequence spans 603 residues: NADH-ubiquinone oxidoreductase chain 5 (603 aa).

Helical transmembrane passes span 4–24, 38–58, 89–109, 122–142, 171–191, 211–233, 241–261, 273–293, 301–320, 325–347, 366–386, 405–424, 457–477, 488–508, 537–557, and 582–602; these read FTTMTALTLTSLIPPITATLI, TAIASAFTISLIPTTMFICLG, FLPVALFVTWSIMEFSLWYMA, LIFLITMIILITANNLLQLFI, AILYNRIGDIGFILTLAWFLL, LPLLGLLLAAAGKSAQLGLHPWL, TPVSALLHSSTMVVAGIFLLI, IQTLALCLGAITTLFAAICAL, IVAFSTSSQLGLMMVTIGIN, AFLHICTHAFFKALLFMCSGSII, MPLTSTSLTISSLALAGMPFL, NAWALSITLIATSLTSAYST, LMTGSLFTGFLITSNIPPTSL, LAALTATLLGLLVALDLNYLA, IPHLSLLMSQNLSLLLLDLTW, and GMIKLYFLSFLIPLLLTLLMI.

Belongs to the complex I subunit 5 family. Core subunit of respiratory chain NADH dehydrogenase (Complex I) which is composed of 45 different subunits.

Its subcellular location is the mitochondrion inner membrane. The enzyme catalyses a ubiquinone + NADH + 5 H(+)(in) = a ubiquinol + NAD(+) + 4 H(+)(out). In terms of biological role, core subunit of the mitochondrial membrane respiratory chain NADH dehydrogenase (Complex I) which catalyzes electron transfer from NADH through the respiratory chain, using ubiquinone as an electron acceptor. Essential for the catalytic activity and assembly of complex I. The chain is NADH-ubiquinone oxidoreductase chain 5 (MT-ND5) from Pongo pygmaeus (Bornean orangutan).